The sequence spans 70 residues: Large ribosomal subunit protein bL31 (70 aa).

Zn(2+) is bound by residues Cys16, Cys18, Cys36, and Cys39.

It belongs to the bacterial ribosomal protein bL31 family. Type A subfamily. Part of the 50S ribosomal subunit. Zn(2+) serves as cofactor.

Binds the 23S rRNA. The sequence is that of Large ribosomal subunit protein bL31 from Tolumonas auensis (strain DSM 9187 / NBRC 110442 / TA 4).